Reading from the N-terminus, the 286-residue chain is Tyrosine recombinase XerA (286 aa).

Residues 5–82 form the Core-binding (CB) domain; that stretch reads TLRSEVLEEF…ALKAYFKFEG (78 aa). The Tyr recombinase domain occupies 98-274; the sequence is TLPKSLTEEE…TAKHLKEAVE (177 aa). Catalysis depends on residues arginine 135, lysine 160, histidine 226, arginine 229, and histidine 252. Tyrosine 261 (O-(3'-phospho-DNA)-tyrosine intermediate) is an active-site residue.

Belongs to the 'phage' integrase family. XerA subfamily.

It localises to the cytoplasm. In terms of biological role, site-specific tyrosine recombinase, which acts by catalyzing the cutting and rejoining of the recombining DNA molecules. This is Tyrosine recombinase XerA from Pyrococcus furiosus (strain ATCC 43587 / DSM 3638 / JCM 8422 / Vc1).